The following is a 1008-amino-acid chain: DNA polymerase catalytic subunit (1008 aa).

It belongs to the DNA polymerase type-B family.

The protein localises to the host nucleus. It catalyses the reaction DNA(n) + a 2'-deoxyribonucleoside 5'-triphosphate = DNA(n+1) + diphosphate. The chain is DNA polymerase catalytic subunit (9) from Equine herpesvirus 2 (strain 86/87) (EHV-2).